A 350-amino-acid chain; its full sequence is Cytosolic Fe-S cluster assembly factor NBP35 (350 aa).

The interval 1-30 (MENGDIPEDANEHCPGPQSESAGKSDSCAG) is disordered. Residues cysteine 14, cysteine 28, cysteine 31, and cysteine 37 each contribute to the [4Fe-4S] cluster site. An ATP-binding site is contributed by 67-74 (GKGGVGKS).

Belongs to the Mrp/NBP35 ATP-binding proteins family. NUBP1/NBP35 subfamily. As to quaternary structure, homodimer and homotetramer. Predominantly homodimeric. The cofactor is [4Fe-4S] cluster.

The protein localises to the cytoplasm. Component of the cytosolic iron-sulfur (Fe-S) protein assembly (CIA) machinery. Required for maturation of extramitochondrial Fe-S proteins. Functions as a Fe-S scaffold, mediating the de novo assembly of an Fe-S cluster and its transfer to target apoproteins. Essential for embryo development. This is Cytosolic Fe-S cluster assembly factor NBP35 from Arabidopsis thaliana (Mouse-ear cress).